The primary structure comprises 192 residues: Epididymal-specific lipocalin-12 (192 aa).

The first 19 residues, 1 to 19 (MRLLCGLWLWLSLLKVLQA), serve as a signal peptide directing secretion. A disulfide bond links cysteine 88 and cysteine 192.

Belongs to the calycin superfamily. Lipocalin family. As to quaternary structure, monomer.

The protein localises to the secreted. Binds all-trans retinoic acid and may act as a retinoid carrier protein within the epididymis. May play a role in male fertility. This is Epididymal-specific lipocalin-12 (LCN12) from Homo sapiens (Human).